The sequence spans 493 residues: Serine/threonine-protein kinase chk-1 (493 aa).

The region spanning 26–286 (YRVIRTLGEG…IEQIKTDPWF (261 aa)) is the Protein kinase domain. ATP contacts are provided by residues 32–40 (LGEGAFGEV) and Lys-56. The Proton acceptor role is filled by Asp-150. Residues 308-348 (DENSPDCNISSTQQADAVSTAKRRHLETPDKVAHVERQNAS) form a disordered region. The segment covering 312-324 (PDCNISSTQQADA) has biased composition (polar residues). Residues 333 to 344 (LETPDKVAHVER) show a composition bias toward basic and acidic residues.

This sequence belongs to the protein kinase superfamily. CAMK Ser/Thr protein kinase family. NIM1 subfamily.

It localises to the cytoplasm. The protein resides in the nucleus. The catalysed reaction is L-seryl-[protein] + ATP = O-phospho-L-seryl-[protein] + ADP + H(+). It catalyses the reaction L-threonyl-[protein] + ATP = O-phospho-L-threonyl-[protein] + ADP + H(+). Its function is as follows. Serine/threonine-protein kinase which is required for checkpoint-mediated cell cycle arrest and activation of DNA repair in response to the presence of DNA damage or unreplicated DNA. May also negatively regulate cell cycle progression during unperturbed cell cycles. Required for checkpoint mediated cell cycle arrest in response to DNA damage in germline cells. Essential for embryogenesis. This Caenorhabditis briggsae protein is Serine/threonine-protein kinase chk-1 (chk-1).